The primary structure comprises 315 residues: GTP cyclohydrolase MptA (315 aa).

The protein belongs to the GTP cyclohydrolase IV family. Homodimer. Fe(2+) is required as a cofactor.

It catalyses the reaction GTP + H2O = 7,8-dihydroneopterin 2',3'-cyclic phosphate + formate + diphosphate + H(+). The protein operates within cofactor biosynthesis; 5,6,7,8-tetrahydromethanopterin biosynthesis. In terms of biological role, converts GTP to 7,8-dihydro-D-neopterin 2',3'-cyclic phosphate, the first intermediate in the biosynthesis of coenzyme methanopterin. The protein is GTP cyclohydrolase MptA of Methanococcus maripaludis (strain DSM 14266 / JCM 13030 / NBRC 101832 / S2 / LL).